The primary structure comprises 233 residues: Inner kinetochore subunit fta4 (233 aa).

A phosphothreonine mark is found at Thr-189 and Thr-191.

The protein belongs to the NKP1 family. In terms of assembly, component of the inner kinetochore constitutive centromere-associated network (CCAN) (also known as central kinetochore Sim4 complex in fission yeast), which is composed of at least cnl2, cnp3, cnp20, fta1, fta2, fta3, fta4, fta6, fta7, mal2, mhf1, mhf2, mis6, mis15, mis17, sim4 and wip1.

The protein resides in the nucleus. Its subcellular location is the chromosome. The protein localises to the centromere. It localises to the kinetochore. Component of the kinetochore, a multiprotein complex that assembles on centromeric DNA and attaches chromosomes to spindle microtubules, mediating chromosome segregation and sister chromatid segregation during meiosis and mitosis. Component of the inner kinetochore constitutive centromere-associated network (CCAN), which serves as a structural platform for outer kinetochore assembly. Fta2, fta3 and fta4 associate with the central core (cnt) and inner repeat (inr) region of the centromere. In Schizosaccharomyces pombe (strain 972 / ATCC 24843) (Fission yeast), this protein is Inner kinetochore subunit fta4 (fta4).